Here is a 78-residue protein sequence, read N- to C-terminus: Protein Class8-like (78 aa).

The first 19 residues, 1–19 (MRTLVVLLIGAVLLCSANA), serve as a signal peptide directing secretion. The propeptide occupies 20–36 (FLDELLAESVNDMTDKR). The region spanning 38 to 78 (CFDKYKSNICGGVISPAHCVRRSGRMAKFAKENCAHFCGFC) is the ShKT domain. Disulfide bonds link cysteine 38–cysteine 78, cysteine 47–cysteine 71, and cysteine 56–cysteine 75.

In terms of tissue distribution, expressed in ganglion neurons residing in the mesoglea (observed in both planulae and primary polyps). Not expressed in nematocytes.

Functionally, probable neuropeptide. The polypeptide is Protein Class8-like (Nematostella vectensis (Starlet sea anemone)).